Reading from the N-terminus, the 560-residue chain is Dihydroxy-acid dehydratase (560 aa).

Asp-78 contributes to the Mg(2+) binding site. Cys-119 is a binding site for [2Fe-2S] cluster. Mg(2+) contacts are provided by Asp-120 and Lys-121. Lys-121 bears the N6-carboxylysine mark. Cys-192 contributes to the [2Fe-2S] cluster binding site. A Mg(2+)-binding site is contributed by Glu-446. Residue Ser-472 is the Proton acceptor of the active site.

Belongs to the IlvD/Edd family. As to quaternary structure, homodimer. [2Fe-2S] cluster is required as a cofactor. It depends on Mg(2+) as a cofactor.

It carries out the reaction (2R)-2,3-dihydroxy-3-methylbutanoate = 3-methyl-2-oxobutanoate + H2O. The enzyme catalyses (2R,3R)-2,3-dihydroxy-3-methylpentanoate = (S)-3-methyl-2-oxopentanoate + H2O. Its pathway is amino-acid biosynthesis; L-isoleucine biosynthesis; L-isoleucine from 2-oxobutanoate: step 3/4. It participates in amino-acid biosynthesis; L-valine biosynthesis; L-valine from pyruvate: step 3/4. In terms of biological role, functions in the biosynthesis of branched-chain amino acids. Catalyzes the dehydration of (2R,3R)-2,3-dihydroxy-3-methylpentanoate (2,3-dihydroxy-3-methylvalerate) into 2-oxo-3-methylpentanoate (2-oxo-3-methylvalerate) and of (2R)-2,3-dihydroxy-3-methylbutanoate (2,3-dihydroxyisovalerate) into 2-oxo-3-methylbutanoate (2-oxoisovalerate), the penultimate precursor to L-isoleucine and L-valine, respectively. This chain is Dihydroxy-acid dehydratase, found in Anaeromyxobacter dehalogenans (strain 2CP-1 / ATCC BAA-258).